A 270-amino-acid polypeptide reads, in one-letter code: 5'-AMP-activated protein kinase subunit beta-1 (270 aa).

Residues 1–44 (MGNTSSERAALDRQGGHKTPRRDSSGGSKDGDRPKILMDSPEDA) are disordered. Residue Gly-2 is the site of N-myristoyl glycine attachment. A Phosphothreonine modification is found at Thr-4. Phosphoserine is present on residues Ser-5 and Ser-6. The span at 9–36 (AALDRQGGHKTPRRDSSGGSKDGDRPKI) shows a compositional bias: basic and acidic residues. Position 19 is a phosphothreonine (Thr-19). Ser-24 and Ser-25 each carry phosphoserine; by autocatalysis. Phosphoserine occurs at positions 40, 96, and 101. A glycogen-binding domain region spans residues 68–163 (EVNDKAPAQA…QVKKTDFEVF (96 aa)). Ser-108 bears the Phosphoserine; by autocatalysis mark. Position 148 is a phosphothreonine (Thr-148). Ser-182 carries the post-translational modification Phosphoserine. Lys-201 is subject to N6-succinyllysine.

Belongs to the 5'-AMP-activated protein kinase beta subunit family. AMPK is a heterotrimer of an alpha catalytic subunit (PRKAA1 or PRKAA2), a beta (PRKAB1 or PRKAB2) and a gamma non-catalytic subunits (PRKAG1, PRKAG2 or PRKAG3). Interacts with FNIP1 and FNIP2. Phosphorylated when associated with the catalytic subunit (PRKAA1 or PRKAA2). Phosphorylated by ULK1; leading to negatively regulate AMPK activity and suggesting the existence of a regulatory feedback loop between ULK1 and AMPK.

Functionally, non-catalytic subunit of AMP-activated protein kinase (AMPK), an energy sensor protein kinase that plays a key role in regulating cellular energy metabolism. In response to reduction of intracellular ATP levels, AMPK activates energy-producing pathways and inhibits energy-consuming processes: inhibits protein, carbohydrate and lipid biosynthesis, as well as cell growth and proliferation. AMPK acts via direct phosphorylation of metabolic enzymes, and by longer-term effects via phosphorylation of transcription regulators. Also acts as a regulator of cellular polarity by remodeling the actin cytoskeleton; probably by indirectly activating myosin. Beta non-catalytic subunit acts as a scaffold on which the AMPK complex assembles, via its C-terminus that bridges alpha (PRKAA1 or PRKAA2) and gamma subunits (PRKAG1, PRKAG2 or PRKAG3). The sequence is that of 5'-AMP-activated protein kinase subunit beta-1 (PRKAB1) from Bos taurus (Bovine).